Consider the following 119-residue polypeptide: Large ribosomal subunit protein uL18 (119 aa).

It belongs to the universal ribosomal protein uL18 family. In terms of assembly, part of the 50S ribosomal subunit; part of the 5S rRNA/L5/L18/L25 subcomplex. Contacts the 5S and 23S rRNAs.

In terms of biological role, this is one of the proteins that bind and probably mediate the attachment of the 5S RNA into the large ribosomal subunit, where it forms part of the central protuberance. This chain is Large ribosomal subunit protein uL18, found in Clostridium kluyveri (strain ATCC 8527 / DSM 555 / NBRC 12016 / NCIMB 10680 / K1).